A 110-amino-acid chain; its full sequence is MNKILLIGRMTKNPSIKQIETTGNNRCNFTIAVNRRVRNTNGENEADFIPVTVWGKTAENVARYMKKGYLVGVSGRLQVRTYQDVDGNRKYITEVVGEEVQFLETKKEAV.

The region spanning 1 to 104 (MNKILLIGRM…VVGEEVQFLE (104 aa)) is the SSB domain.

Homotetramer.

This chain is Single-stranded DNA-binding protein 1 (ssb1), found in Clostridium acetobutylicum (strain ATCC 824 / DSM 792 / JCM 1419 / IAM 19013 / LMG 5710 / NBRC 13948 / NRRL B-527 / VKM B-1787 / 2291 / W).